A 593-amino-acid chain; its full sequence is DNA mismatch repair protein MutL (593 aa).

Belongs to the DNA mismatch repair MutL/HexB family.

Its function is as follows. This protein is involved in the repair of mismatches in DNA. It is required for dam-dependent methyl-directed DNA mismatch repair. May act as a 'molecular matchmaker', a protein that promotes the formation of a stable complex between two or more DNA-binding proteins in an ATP-dependent manner without itself being part of a final effector complex. This is DNA mismatch repair protein MutL from Leptospira interrogans serogroup Icterohaemorrhagiae serovar copenhageni (strain Fiocruz L1-130).